We begin with the raw amino-acid sequence, 346 residues long: Phosphoribosylformylglycinamidine cyclo-ligase (346 aa).

The protein belongs to the AIR synthase family.

It is found in the cytoplasm. It carries out the reaction 2-formamido-N(1)-(5-O-phospho-beta-D-ribosyl)acetamidine + ATP = 5-amino-1-(5-phospho-beta-D-ribosyl)imidazole + ADP + phosphate + H(+). It participates in purine metabolism; IMP biosynthesis via de novo pathway; 5-amino-1-(5-phospho-D-ribosyl)imidazole from N(2)-formyl-N(1)-(5-phospho-D-ribosyl)glycinamide: step 2/2. This chain is Phosphoribosylformylglycinamidine cyclo-ligase, found in Brevibacillus brevis (strain 47 / JCM 6285 / NBRC 100599).